The following is a 300-amino-acid chain: L-threonine kinase (300 aa).

92–102 contacts ATP; sequence PVAKGMASSTA.

It belongs to the GHMP kinase family. PduX subfamily.

Its subcellular location is the cytoplasm. It catalyses the reaction L-threonine + ATP = O-phospho-L-threonine + ADP + H(+). It participates in cofactor biosynthesis; adenosylcobalamin biosynthesis. Its pathway is polyol metabolism; 1,2-propanediol degradation. Its function is as follows. L-threonine kinase that catalyzes the conversion of L-threonine to L-threonine-O-3-phosphate. Involved in the de novo synthesis of adenosylcobalamin (coenzyme B12) and the assimilation of cobyric acid. Uses ATP; the activity with CTP, GTP or UTP is 6, 11, and 3% of the activity with ATP, respectively. The 1,2-propanediol (1,2-PD)-specific bacterial microcompartment (BMC) concentrates low levels of 1,2-PD catabolic enzymes, concentrates volatile reaction intermediates thus enhancing pathway flux and keeps the level of toxic, mutagenic propionaldehyde low. This gene probably benefits from its induction via the Pdu promoter, rather than a physical interaction with the BMC. This chain is L-threonine kinase, found in Salmonella typhimurium (strain LT2 / SGSC1412 / ATCC 700720).